The sequence spans 594 residues: Neopentalenolactone D synthase (594 aa).

Residues 64–65, 86–87, 94–95, 106–107, Tyr-112, Val-156, and Met-494 each bind FAD; these read IG, DK, TW, and DV.

It belongs to the FAD-binding monooxygenase family. The cofactor is FAD.

It catalyses the reaction 1-deoxy-11-oxopentalenate + NADPH + O2 + H(+) = neopentalenolactone D + NADP(+) + H2O. The protein operates within antibiotic biosynthesis; neopentalenolactone biosynthesis. Its function is as follows. Catalyzes the flavin-dependent Baeyer-Villiger oxidation of 1-deoxy-11-oxopentalenic acid to neopentalenolactone D in the biosynthesis of neopentalenolactone antibiotic. The sequence is that of Neopentalenolactone D synthase (ptlE) from Streptomyces avermitilis (strain ATCC 31267 / DSM 46492 / JCM 5070 / NBRC 14893 / NCIMB 12804 / NRRL 8165 / MA-4680).